The chain runs to 220 residues: Small ribosomal subunit protein eS8 (220 aa).

The protein belongs to the eukaryotic ribosomal protein eS8 family.

In Leishmania major, this protein is Small ribosomal subunit protein eS8 (RPS8A).